The primary structure comprises 89 residues: Small ribosomal subunit protein uS15 (89 aa).

Positions 1-20 (MSITQERKSALIAEHARGKT) are enriched in basic and acidic residues. Residues 1 to 24 (MSITQERKSALIAEHARGKTDTGS) are disordered.

This sequence belongs to the universal ribosomal protein uS15 family. As to quaternary structure, part of the 30S ribosomal subunit. Forms a bridge to the 50S subunit in the 70S ribosome, contacting the 23S rRNA.

One of the primary rRNA binding proteins, it binds directly to 16S rRNA where it helps nucleate assembly of the platform of the 30S subunit by binding and bridging several RNA helices of the 16S rRNA. Functionally, forms an intersubunit bridge (bridge B4) with the 23S rRNA of the 50S subunit in the ribosome. This Maricaulis maris (strain MCS10) (Caulobacter maris) protein is Small ribosomal subunit protein uS15.